A 270-amino-acid chain; its full sequence is Peflin (270 aa).

Positions 1–97 (MSYQYGQGYS…YRQQGSAGNV (97 aa)) are disordered. Repeat copies occupy residues 22 to 30 (PPRAPYAGG), 44 to 54 (PPGQQYGGGSP), 62 to 70 (GPRAPYGGG), 72 to 81 (APGGPYGGYG), and 83 to 91 (PQGGPYRQQ). The 5 X 9 AA approximate tandem repeat of [AP]-P-G-G-P-Y-G-G-P-P stretch occupies residues 22–91 (PPRAPYAGGP…QPQGGPYRQQ (70 aa)). 2 stretches are compositionally biased toward low complexity: residues 26 to 47 (PYAG…PPGQ) and 55 to 66 (YGSYGQPGPRAP). The span at 67 to 84 (YGGGQAPGGPYGGYGQPQ) shows a compositional bias: gly residues. EF-hand domains lie at 100-135 (GVNP…FNNS), 141-169 (TCIM…WTFL), 170-202 (QQWR…MGYN), 203-239 (LSPQ…LQSM), and 240-269 (TQAF…ITRL). Residues D113, D115, S117, Y119, and E124 each contribute to the Ca(2+) site. The Ca(2+) site is built by D180, D182, S184, S186, and E191.

Heterodimer; heterodimerizes (via the EF-hand 5) with pdcd6.

It localises to the cytoplasm. The protein localises to the endoplasmic reticulum. The protein resides in the membrane. Its subcellular location is the cytoplasmic vesicle. It is found in the COPII-coated vesicle membrane. In terms of biological role, calcium-binding protein that acts as an adapter that bridges unrelated proteins or stabilizes weak protein-protein complexes in response to calcium. Acts as a negative regulator of ER-Golgi transport. This Danio rerio (Zebrafish) protein is Peflin.